Consider the following 107-residue polypeptide: Phosphoribosyl-ATP pyrophosphatase (107 aa).

Belongs to the PRA-PH family.

It is found in the cytoplasm. It catalyses the reaction 1-(5-phospho-beta-D-ribosyl)-ATP + H2O = 1-(5-phospho-beta-D-ribosyl)-5'-AMP + diphosphate + H(+). It functions in the pathway amino-acid biosynthesis; L-histidine biosynthesis; L-histidine from 5-phospho-alpha-D-ribose 1-diphosphate: step 2/9. This chain is Phosphoribosyl-ATP pyrophosphatase, found in Sinorhizobium medicae (strain WSM419) (Ensifer medicae).